A 116-amino-acid polypeptide reads, in one-letter code: uncharacterized protein (116 aa).

The 78-residue stretch at 6–83 (ATVHVGNLAP…RCIRVSPANF (78 aa)) folds into the RRM domain.

It localises to the cytoplasm. The protein localises to the nucleus. This is an uncharacterized protein from Schizosaccharomyces pombe (strain 972 / ATCC 24843) (Fission yeast).